Consider the following 97-residue polypeptide: Mapk-regulated corepressor-interacting protein 1 (97 aa).

The interval 1–30 (MTSSPVSRVVYNGKRTSSPRSPPSSSEIFT) is disordered. Residues serine 21 and serine 24 each carry the phosphoserine modification. Phosphothreonine is present on threonine 30. Residue tyrosine 41 is modified to Phosphotyrosine. Lysine 79 bears the N6-acetyllysine mark. The short motif at 80–84 (PIDLS) is the PXDLS motif element.

The protein belongs to the MCRIP family. Interacts (unphosphorylated form, via the PXDLS motif) with CTBP1, competitively inhibiting CTBP-ZEB1 interaction. Interacts with CTBP2. Interacts with MCRIP2. Interacts with DDX6. Phosphorylation by MAPK3/1 (ERK1/2) regulates MCRIP1 binding to CTBP(s).

It is found in the nucleus. It localises to the cytoplasm. Its subcellular location is the stress granule. Its function is as follows. The phosphorylation status of MCRIP1 functions as a molecular switch to regulate epithelial-mesenchymal transition. Unphosphorylated MCRIP1 binds to and inhibits the transcriptional corepressor CTBP(s). When phosphorylated by MAPK/ERK, MCRIP1 releases CTBP(s) resulting in transcriptional silencing of the E-cadherin gene and induction of epithelial-mesenchymal transition. This is Mapk-regulated corepressor-interacting protein 1 from Homo sapiens (Human).